The sequence spans 280 residues: BURP domain protein USPL1 (280 aa).

Positions 1-24 are cleaved as a signal peptide; it reads MASTFRLSISFLTLILFSLWVVEA. A BURP domain is found at 58-280; sequence YFTLNDLKLG…PLDNIVWVTK (223 aa).

Expressed in cotyledons, radicle, floral buds, open flowers, roots and developing seeds, but not in leaves. Highly expressed in the root tips. Detected in young leaves, hypocotyls, stems and mature seed funiculum.

It localises to the protein storage vacuole. The protein localises to the golgi apparatus. Its subcellular location is the golgi stack. The protein resides in the trans-Golgi network. It is found in the prevacuolar compartment. In terms of biological role, associated with the protein storage vacuole formation. The protein is BURP domain protein USPL1 of Arabidopsis thaliana (Mouse-ear cress).